Here is a 255-residue protein sequence, read N- to C-terminus: Transmembrane protein 81 (255 aa).

The first 30 residues, 1-30, serve as a signal peptide directing secretion; that stretch reads MKVLATSFVLGSLGLAFYLPLVVTTPKTLA. The Extracellular portion of the chain corresponds to 31 to 226; the sequence is IPEKLQEAVG…HPKWKKKVAS (196 aa). Asparagine 45 carries N-linked (GlcNAc...) asparagine glycosylation. One can recognise an Ig-like domain in the interval 83–171; the sequence is TNWICGMLHF…VQLVKNLRLV (89 aa). Cysteine 104 and cysteine 160 are disulfide-bonded. Residues 227–247 form a helical membrane-spanning segment; the sequence is ALGIGIAIGVVGGVLVRIVLC. At 248–255 the chain is on the cytoplasmic side; sequence ALRGGLQQ.

Forms a complex with IZUMO1 and SPACA6 on spermatocyte cell membrane required for fertilization. In terms of tissue distribution, highly expressed in sperm (at protein level).

It localises to the cell membrane. Functionally, essential fertilization factor required for male fertility. Part of a conserved trimeric sperm complex with the essential fertilization factors IZUMO1 and SPACA6 which bridges sperm and oocyte membranes during fertilization by binding to IZUMO1R/JUNO on the oocyte. This is Transmembrane protein 81 from Homo sapiens (Human).